Here is a 194-residue protein sequence, read N- to C-terminus: Small ribosomal subunit protein uS4c (194 aa).

Positions 84–144 (MRLDTLLYRT…KEILKSLNDK (61 aa)) constitute an S4 RNA-binding domain.

Belongs to the universal ribosomal protein uS4 family. As to quaternary structure, part of the 30S ribosomal subunit. Contacts protein S5. The interaction surface between S4 and S5 is involved in control of translational fidelity.

Its subcellular location is the plastid. The protein localises to the chloroplast. In terms of biological role, one of the primary rRNA binding proteins, it binds directly to 16S rRNA where it nucleates assembly of the body of the 30S subunit. Functionally, with S5 and S12 plays an important role in translational accuracy. This chain is Small ribosomal subunit protein uS4c (rps4), found in Bigelowiella natans (Pedinomonas minutissima).